We begin with the raw amino-acid sequence, 309 residues long: Glutaminase (309 aa).

The substrate site is built by Ser-65, Asn-117, Glu-162, Asn-169, Tyr-193, Tyr-245, and Val-263.

It belongs to the glutaminase family. As to quaternary structure, homotetramer.

It catalyses the reaction L-glutamine + H2O = L-glutamate + NH4(+). This chain is Glutaminase, found in Geobacillus thermodenitrificans (strain NG80-2).